Reading from the N-terminus, the 282-residue chain is Undecaprenyl-diphosphatase (282 aa).

8 helical membrane-spanning segments follow: residues 2–22, 47–67, 90–110, 115–135, 152–172, 190–210, 225–245, and 259–279; these read FDFI…FLPV, FTAV…IQLY, WIKV…LNNF, LLNP…FIVI, ITFK…VPGT, FVAA…VTIL, AQLF…LFAI, and IFGW…IAGL.

This sequence belongs to the UppP family.

Its subcellular location is the cell membrane. It carries out the reaction di-trans,octa-cis-undecaprenyl diphosphate + H2O = di-trans,octa-cis-undecaprenyl phosphate + phosphate + H(+). Functionally, catalyzes the dephosphorylation of undecaprenyl diphosphate (UPP). Confers resistance to bacitracin. The protein is Undecaprenyl-diphosphatase of Leuconostoc citreum (strain KM20).